We begin with the raw amino-acid sequence, 505 residues long: Lysine--tRNA ligase (505 aa).

The Mg(2+) site is built by Glu415 and Glu422.

This sequence belongs to the class-II aminoacyl-tRNA synthetase family. As to quaternary structure, homodimer. The cofactor is Mg(2+).

It localises to the cytoplasm. The enzyme catalyses tRNA(Lys) + L-lysine + ATP = L-lysyl-tRNA(Lys) + AMP + diphosphate. The sequence is that of Lysine--tRNA ligase from Shigella flexneri.